The chain runs to 194 residues: Crossover junction endodeoxyribonuclease RuvC (194 aa).

Catalysis depends on residues Asp-7, Glu-68, and Asp-141. Asp-7, Glu-68, and Asp-141 together coordinate Mg(2+). The tract at residues 162-194 (GGEREQHLTAAQRQWAEAAQNSTRRRKNSDRGM) is disordered. The segment covering 184-194 (TRRRKNSDRGM) has biased composition (basic residues).

The protein belongs to the RuvC family. Homodimer which binds Holliday junction (HJ) DNA. The HJ becomes 2-fold symmetrical on binding to RuvC with unstacked arms; it has a different conformation from HJ DNA in complex with RuvA. In the full resolvosome a probable DNA-RuvA(4)-RuvB(12)-RuvC(2) complex forms which resolves the HJ. Mg(2+) serves as cofactor.

It localises to the cytoplasm. The catalysed reaction is Endonucleolytic cleavage at a junction such as a reciprocal single-stranded crossover between two homologous DNA duplexes (Holliday junction).. Functionally, the RuvA-RuvB-RuvC complex processes Holliday junction (HJ) DNA during genetic recombination and DNA repair. Endonuclease that resolves HJ intermediates. Cleaves cruciform DNA by making single-stranded nicks across the HJ at symmetrical positions within the homologous arms, yielding a 5'-phosphate and a 3'-hydroxyl group; requires a central core of homology in the junction. The consensus cleavage sequence is 5'-(A/T)TT(C/G)-3'. Cleavage occurs on the 3'-side of the TT dinucleotide at the point of strand exchange. HJ branch migration catalyzed by RuvA-RuvB allows RuvC to scan DNA until it finds its consensus sequence, where it cleaves and resolves the cruciform DNA. The protein is Crossover junction endodeoxyribonuclease RuvC of Bifidobacterium longum subsp. infantis (strain ATCC 15697 / DSM 20088 / JCM 1222 / NCTC 11817 / S12).